We begin with the raw amino-acid sequence, 430 residues long: Adenylosuccinate synthetase (430 aa).

GTP-binding positions include 12-18 (GDEGKGK) and 40-42 (GHT). Aspartate 13 serves as the catalytic Proton acceptor. Residues aspartate 13 and glycine 40 each contribute to the Mg(2+) site. IMP-binding positions include 13–16 (DEGK), 38–41 (NAGH), threonine 128, arginine 142, glutamine 223, threonine 238, and arginine 302. Histidine 41 serves as the catalytic Proton donor. 298 to 304 (TTTGRPR) provides a ligand contact to substrate. GTP contacts are provided by residues arginine 304, 330-332 (LLD), and 412-414 (SVG).

This sequence belongs to the adenylosuccinate synthetase family. Homodimer. The cofactor is Mg(2+).

It is found in the cytoplasm. It carries out the reaction IMP + L-aspartate + GTP = N(6)-(1,2-dicarboxyethyl)-AMP + GDP + phosphate + 2 H(+). It participates in purine metabolism; AMP biosynthesis via de novo pathway; AMP from IMP: step 1/2. Functionally, plays an important role in the de novo pathway of purine nucleotide biosynthesis. Catalyzes the first committed step in the biosynthesis of AMP from IMP. In Listeria monocytogenes serotype 4a (strain HCC23), this protein is Adenylosuccinate synthetase.